Reading from the N-terminus, the 121-residue chain is Ragulator complex protein LAMTOR4 homolog (121 aa).

Residues 91-121 (TQNGATTSSSSSTSYNDAAEGNNISSSTVLA) form a disordered region. The span at 112–121 (NNISSSTVLA) shows a compositional bias: polar residues.

This sequence belongs to the LAMTOR4 family. In terms of assembly, part of the Ragulator complex.

The protein resides in the lysosome. Its function is as follows. Regulator of the TOR pathway, a signaling cascade that promotes cell growth in response to growth factors, energy levels, and amino acids. As part of the Ragulator complex, may activate the TOR signaling cascade in response to amino acids. This is Ragulator complex protein LAMTOR4 homolog from Drosophila pseudoobscura pseudoobscura (Fruit fly).